An 892-amino-acid chain; its full sequence is Alanine--tRNA ligase (892 aa).

4 residues coordinate Zn(2+): histidine 596, histidine 600, cysteine 700, and histidine 704.

This sequence belongs to the class-II aminoacyl-tRNA synthetase family. The cofactor is Zn(2+).

Its subcellular location is the cytoplasm. It carries out the reaction tRNA(Ala) + L-alanine + ATP = L-alanyl-tRNA(Ala) + AMP + diphosphate. Functionally, catalyzes the attachment of alanine to tRNA(Ala) in a two-step reaction: alanine is first activated by ATP to form Ala-AMP and then transferred to the acceptor end of tRNA(Ala). Also edits incorrectly charged Ser-tRNA(Ala) and Gly-tRNA(Ala) via its editing domain. In Methanococcus maripaludis (strain C7 / ATCC BAA-1331), this protein is Alanine--tRNA ligase.